The primary structure comprises 272 residues: MDRQIPTPENPWLALRNLTPARIALGRSGISLPTSAQLDFQFAHAQARDAVHLAFDHTALSEQLKERGRDSLVLHSAASDRNQYLQRPDLGRRLNERSVEQLRQHAKTNPGGCDLAIVVADGLSALAVHRHTLPFLARFEEQAAADGWTSAPVVLVEQGRVAVADEVGQLLGARMTVMLIGERPGLSSPDSLGLYFTYAPKVGLTDAYRNCISNVRLEGLSYGMAAHRLLYLMREACRRQLSGVNLKDEAEVHTIDSENTSNQKGNFLLGEG.

Residues valine 161, glutamate 182, and cysteine 211 each coordinate adenosylcob(III)alamin.

The protein belongs to the EutC family. As to quaternary structure, the basic unit is a heterodimer which dimerizes to form tetramers. The heterotetramers trimerize; 6 large subunits form a core ring with 6 small subunits projecting outwards. The cofactor is adenosylcob(III)alamin.

It is found in the bacterial microcompartment. The enzyme catalyses ethanolamine = acetaldehyde + NH4(+). It participates in amine and polyamine degradation; ethanolamine degradation. Catalyzes the deamination of various vicinal amino-alcohols to oxo compounds. Allows this organism to utilize ethanolamine as the sole source of nitrogen and carbon in the presence of external vitamin B12. This Pseudomonas putida (strain W619) protein is Ethanolamine ammonia-lyase small subunit.